The sequence spans 197 residues: Imidazoleglycerol-phosphate dehydratase (197 aa).

Belongs to the imidazoleglycerol-phosphate dehydratase family.

The protein localises to the cytoplasm. The enzyme catalyses D-erythro-1-(imidazol-4-yl)glycerol 3-phosphate = 3-(imidazol-4-yl)-2-oxopropyl phosphate + H2O. It functions in the pathway amino-acid biosynthesis; L-histidine biosynthesis; L-histidine from 5-phospho-alpha-D-ribose 1-diphosphate: step 6/9. The polypeptide is Imidazoleglycerol-phosphate dehydratase (Xanthobacter autotrophicus (strain ATCC BAA-1158 / Py2)).